A 234-amino-acid polypeptide reads, in one-letter code: Thiamine-phosphate synthase (234 aa).

4-amino-2-methyl-5-(diphosphooxymethyl)pyrimidine contacts are provided by residues 65–69 (QYRNK) and Asn97. Residues Asp98 and Asp117 each contribute to the Mg(2+) site. Ser136 contributes to the 4-amino-2-methyl-5-(diphosphooxymethyl)pyrimidine binding site. 163–165 (SHT) serves as a coordination point for 2-[(2R,5Z)-2-carboxy-4-methylthiazol-5(2H)-ylidene]ethyl phosphate. Residue Lys166 coordinates 4-amino-2-methyl-5-(diphosphooxymethyl)pyrimidine. 2-[(2R,5Z)-2-carboxy-4-methylthiazol-5(2H)-ylidene]ethyl phosphate is bound by residues Gly192 and 212–213 (IS).

It belongs to the thiamine-phosphate synthase family. Mg(2+) serves as cofactor.

It carries out the reaction 2-[(2R,5Z)-2-carboxy-4-methylthiazol-5(2H)-ylidene]ethyl phosphate + 4-amino-2-methyl-5-(diphosphooxymethyl)pyrimidine + 2 H(+) = thiamine phosphate + CO2 + diphosphate. The catalysed reaction is 2-(2-carboxy-4-methylthiazol-5-yl)ethyl phosphate + 4-amino-2-methyl-5-(diphosphooxymethyl)pyrimidine + 2 H(+) = thiamine phosphate + CO2 + diphosphate. The enzyme catalyses 4-methyl-5-(2-phosphooxyethyl)-thiazole + 4-amino-2-methyl-5-(diphosphooxymethyl)pyrimidine + H(+) = thiamine phosphate + diphosphate. Its pathway is cofactor biosynthesis; thiamine diphosphate biosynthesis; thiamine phosphate from 4-amino-2-methyl-5-diphosphomethylpyrimidine and 4-methyl-5-(2-phosphoethyl)-thiazole: step 1/1. Functionally, condenses 4-methyl-5-(beta-hydroxyethyl)thiazole monophosphate (THZ-P) and 2-methyl-4-amino-5-hydroxymethyl pyrimidine pyrophosphate (HMP-PP) to form thiamine monophosphate (TMP). In Xylella fastidiosa (strain 9a5c), this protein is Thiamine-phosphate synthase.